Here is a 763-residue protein sequence, read N- to C-terminus: Phosphoglycerol transferase I (763 aa).

4 consecutive transmembrane segments (helical) span residues 1–21, 26–46, 77–97, and 108–128; these read MSELLSFALFLASVLIYAWKA, WWFAATLTVLGLFVVLNITLF, ILPGIGIVLGLTAVFGALGWI, and FGYSLLALLLALGSVDASPAF.

Belongs to the OpgB family.

Its subcellular location is the cell inner membrane. The catalysed reaction is a phosphatidylglycerol + a membrane-derived-oligosaccharide D-glucose = a 1,2-diacyl-sn-glycerol + a membrane-derived-oligosaccharide 6-(glycerophospho)-D-glucose.. Its pathway is glycan metabolism; osmoregulated periplasmic glucan (OPG) biosynthesis. In terms of biological role, transfers a phosphoglycerol residue from phosphatidylglycerol to the membrane-bound nascent glucan backbones. The polypeptide is Phosphoglycerol transferase I (Escherichia coli O45:K1 (strain S88 / ExPEC)).